Here is a 150-residue protein sequence, read N- to C-terminus: Deoxyuridine 5'-triphosphate nucleotidohydrolase (150 aa).

Substrate is bound by residues 69 to 71, Asn82, 86 to 88, and Met96; these read RSG and LID.

It belongs to the dUTPase family. Mg(2+) serves as cofactor.

The enzyme catalyses dUTP + H2O = dUMP + diphosphate + H(+). Its pathway is pyrimidine metabolism; dUMP biosynthesis; dUMP from dCTP (dUTP route): step 2/2. Functionally, this enzyme is involved in nucleotide metabolism: it produces dUMP, the immediate precursor of thymidine nucleotides and it decreases the intracellular concentration of dUTP so that uracil cannot be incorporated into DNA. This chain is Deoxyuridine 5'-triphosphate nucleotidohydrolase, found in Acinetobacter baylyi (strain ATCC 33305 / BD413 / ADP1).